Reading from the N-terminus, the 446-residue chain is uncharacterized protein (446 aa).

2 disordered regions span residues 63–95 (KNKP…SDLR) and 155–232 (AESS…HPVK). Residues 156–169 (ESSVPTPKLTNESN) show a composition bias toward polar residues. Basic and acidic residues-rich tracts occupy residues 182–199 (DQHE…DHSA) and 213–227 (ITKE…EARK).

This is an uncharacterized protein from Mus musculus (Mouse).